Here is a 197-residue protein sequence, read N- to C-terminus: RILP-like protein 2 (197 aa).

The RH1 domain maps to 14–96; sequence EDEGALAKSP…KQEVEGLRRA (83 aa). The stretch at 65–153 forms a coiled coil; it reads LEALVNEGSL…VQEELQCYRS (89 aa). The region spanning 119-184 is the RH2 domain; it reads RPRFTLQELR…GNGEKEERTI (66 aa).

In terms of assembly, homodimer. Interacts (via N-terminus) with MYO5A, the interaction is required for its role in dendrite formation. Interacts with RAC1. Interacts with RAB8A; interaction is dependent on the phosphorylation of RAB8A on 'Thr-72'. Interacts with RAB10 and RAB12; interaction is dependent on the phosphorylation of 'Thr-73' on RAB10 and 'Ser-105' on RAB12.

The protein localises to the cytoplasm. The protein resides in the cytosol. Its subcellular location is the cytoskeleton. It is found in the microtubule organizing center. It localises to the centrosome. The protein localises to the cell projection. The protein resides in the cilium. Functionally, involved in cell shape and neuronal morphogenesis, positively regulating the establishment and maintenance of dendritic spines. Plays a role in cellular protein transport, including protein transport away from primary cilia. May function via activation of RAC1 and PAK1. This chain is RILP-like protein 2 (Rilpl2), found in Rattus norvegicus (Rat).